Here is a 253-residue protein sequence, read N- to C-terminus: Protein C1orf43 homolog (253 aa).

A helical membrane pass occupies residues 11–31; sequence VNVVLVMAYGSLVFVLLFIFV.

It localises to the membrane. The protein localises to the golgi apparatus. It is found in the mitochondrion. General regulator of phagocytosis. Required to uptake Gram negative bacterium by macrophages. This Mus musculus (Mouse) protein is Protein C1orf43 homolog.